The primary structure comprises 79 residues: Schistosomin (79 aa).

Post-translationally, contains four disulfide bonds. In terms of tissue distribution, growth-controlling neurosecretory light green cells, in the cerebral ganglia of the CNS.

It is found in the secreted. In terms of biological role, anti-gonadotropic neuropeptide. It also decreases the binding capacity of calfluxin to membrane-bound receptors of the albumen gland. This leads to inhibition of the reproductive activities of the infected snail. This is Schistosomin from Lymnaea stagnalis (Great pond snail).